The sequence spans 156 residues: Small ribosomal subunit protein uS7 (156 aa).

The protein belongs to the universal ribosomal protein uS7 family. As to quaternary structure, part of the 30S ribosomal subunit. Contacts proteins S9 and S11.

Functionally, one of the primary rRNA binding proteins, it binds directly to 16S rRNA where it nucleates assembly of the head domain of the 30S subunit. Is located at the subunit interface close to the decoding center, probably blocks exit of the E-site tRNA. This Paramagnetospirillum magneticum (strain ATCC 700264 / AMB-1) (Magnetospirillum magneticum) protein is Small ribosomal subunit protein uS7.